We begin with the raw amino-acid sequence, 201 residues long: Imidazoleglycerol-phosphate dehydratase (201 aa).

Belongs to the imidazoleglycerol-phosphate dehydratase family.

The protein resides in the cytoplasm. The catalysed reaction is D-erythro-1-(imidazol-4-yl)glycerol 3-phosphate = 3-(imidazol-4-yl)-2-oxopropyl phosphate + H2O. It participates in amino-acid biosynthesis; L-histidine biosynthesis; L-histidine from 5-phospho-alpha-D-ribose 1-diphosphate: step 6/9. The protein is Imidazoleglycerol-phosphate dehydratase of Synechococcus sp. (strain CC9902).